We begin with the raw amino-acid sequence, 519 residues long: Dideacetyl fusicoccin A C-19 hydroxylase (519 aa).

The helical transmembrane segment at 16-36 (LPVAPILFTALAATIGAFLLS) threads the bilayer. 4 N-linked (GlcNAc...) asparagine glycosylation sites follow: asparagine 177, asparagine 327, asparagine 414, and asparagine 432. Heme is bound at residue cysteine 454.

This sequence belongs to the cytochrome P450 family. Requires heme as cofactor.

Its subcellular location is the membrane. It functions in the pathway mycotoxin biosynthesis. Functionally, cytochrome P450 monooxygenase; part of the 2 gene clusters that mediate the biosynthesis of fusicoccins, diterpene glucosides that display phytohormone-like activity and function as potent activators of plasma membrane H(+)-ATPases in plants by modifying 14-3-3 proteins and cause the plant disease constriction canker. The first step in the pathway is performed by the fusicoccadiene synthase PaFS that possesses both prenyl transferase and terpene cyclase activity, converting isopentenyl diphosphate and dimethylallyl diphosphate into geranylgeranyl diphosphate (GGDP) and successively converting GGDP into fusicocca-2,10(14)-diene, a precursor for fusicoccin H. The second step is the oxidation at the C-8 position by the cytochrome P450 monooxygenase PaP450-2 to yield fusicocca-2,10(14)-diene-8-beta-ol. The cytochrome P450 monooxygenase PaP450-1 then catalyzes the hydroxylation at the C-16 position to produce fusicocca-2,10(14)-diene-8-beta,16-diol. The dioxygenase fc-dox then catalyzes the 16-oxydation of fusicocca-2,10(14)-diene-8-beta,16-diol to yield an aldehyde (8-beta-hydroxyfusicocca-1,10(14)-dien-16-al). The short-chain dehydrogenase/reductase fc-sdr catalyzes the reduction of the aldehyde to yield fusicocca-1,10(14)-diene-8-beta,16-diol. The next step is the hydroxylation at C-9 performed by the cytochrome P450 monooxygenase PaP450-3 that leads to fusicoccin H aglycon which is glycosylated to fusicoccin H by the O-glycosyltransferase PaGT. Hydroxylation at C-12 by the cytochrome P450 monooxygenase PaP450-4 leads then to the production of fusicoccin Q and is followed by methylation by the O-methyltransferase PaMT to yield fusicoccin P. Fusicoccin P is further converted to fusicoccin J via prenylation by the O-glucose prenyltransferase PaPT. Cytochrome P450 monooxygenase PaP450-5 then performs hydroxylation at C-19 to yield dideacetyl-fusicoccin A which is acetylated to 3'-O-deacetyl-fusicoccin A by the O-acetyltransferase PaAT-2. Finally, a another acetylation by the O-acetyltransferase PaAT-1 yields fusicoccin A. This is Dideacetyl fusicoccin A C-19 hydroxylase from Phomopsis amygdali (Fusicoccum amygdali).